The sequence spans 480 residues: Peptidase S41 family protein ustP (480 aa).

Residues 78–97 (CMPNKKSRPPDPRPSLAVGK) form a disordered region. The interval 134 to 336 (DVAVLQLPTF…LKQQGVRSIV (203 aa)) is peptidase S41 domain.

Belongs to the peptidase S41A family.

It participates in mycotoxin biosynthesis. Functionally, peptidase S41 family protein; part of the gene cluster that mediates the biosynthesis of the secondary metabolite ustiloxin B, an antimitotic tetrapeptide. First, ustA is processed by the subtilisin-like endoprotease Kex2 that is outside the ustiloxin B gene cluster, at the C-terminal side of Arg-Lys, after transfer to Golgi apparatus through the endoplasmic reticulum (ER). Cleavage by KEX2 generates 16 peptides YAIG-I to YAIG-XVI. To process the precursor peptide further, at least two peptidases are necessary to cleave the N-terminal and C-terminal sides of the Tyr-Ala-Ile-Gly core peptide which serves as backbone for the synthesis of ustiloxin B, through cyclization and modification of the tyrosine with a non-protein coding amino acid, norvaline. One of the two peptidases must be the serine peptidase ustP; and the other pepdidase is probably ustH. Macrocyclization of the core peptide derived from ustA requires the tyrosinase ustQ, as well as the homologous oxidases ustYa and ustYb, and leads to the production of the first cyclization product N-desmethylustiloxin F. For the formation of N-desmethylustiloxin F, three oxidation steps are required, hydroxylation at the benzylic position, hydroxylation at either the aromatic ring of Tyr or beta-position of Ile, and oxidative cyclization. UstQ may catalyze the oxidation of a phenol moiety, whereas the ustYa and ustYb are most likely responsible for the remaining two-step oxidations. N-desmethylustiloxin F is then methylated by ustM to yield ustiloxin F which in turn substrate of the cytochrome P450 monooxygenase ustC which catalyzes the formation of S-deoxyustiloxin H. The flavoprotein monooxygenases ustF1 and ustF2 then participate in the modification of the side chain of S-deoxyustiloxin H, leading to the synthesis of an oxime intermediate, via ustiloxin H. Finally, carboxylative dehydration performed by the cysteine desulfurase-like protein ustD yields ustiloxin B. The chain is Peptidase S41 family protein ustP from Aspergillus flavus (strain ATCC 200026 / FGSC A1120 / IAM 13836 / NRRL 3357 / JCM 12722 / SRRC 167).